A 1464-amino-acid polypeptide reads, in one-letter code: Bridge-like lipid transfer protein family member 3B (1464 aa).

In terms of domain architecture, Chorein N-terminal spans 3 to 94 (GIIKKQILKH…DKVIMEMSTC (92 aa)). 2 disordered regions span residues 267–297 (STEQ…TQTS) and 409–436 (DHNV…YPLK). Residues 278–297 (PTQSSTVVASAQQVKTTQTS) show a composition bias toward polar residues. Ser414, Ser418, Ser774, Ser935, and Ser1009 each carry phosphoserine. 3 disordered regions span residues 1066 to 1089 (SKEE…PKER), 1164 to 1183 (LQNY…EGAQ), and 1392 to 1413 (QRSV…QSAN). 2 stretches are compositionally biased toward polar residues: residues 1164-1182 (LQNY…SEGA) and 1394-1413 (SVTQ…QSAN). A coiled-coil region spans residues 1418-1456 (SFDFTREQLMEENESLKQELAKAKMALAEAHLEKDALLH).

Monomer. Homodimer (via N-terminus). Associates with the Golgi-associated retrograde protein (GARP) complex. Interacts with GARP complex component VPS52. Interacts (via C-terminal coiled-coil domain) with STX6.

It localises to the cytoplasm. It is found in the cytosol. Its subcellular location is the early endosome. Functionally, tube-forming lipid transport protein which mediates the transfer of lipids between membranes at organelle contact sites. Required for retrograde traffic of vesicle clusters in the early endocytic pathway to the Golgi complex. The polypeptide is Bridge-like lipid transfer protein family member 3B (Homo sapiens (Human)).